A 424-amino-acid chain; its full sequence is Serine--tRNA ligase (424 aa).

231-233 (TAE) provides a ligand contact to L-serine. Position 262-264 (262-264 (RSE)) interacts with ATP. Glutamate 285 provides a ligand contact to L-serine. An ATP-binding site is contributed by 349–352 (EISS). Serine 385 contributes to the L-serine binding site.

The protein belongs to the class-II aminoacyl-tRNA synthetase family. Type-1 seryl-tRNA synthetase subfamily. In terms of assembly, homodimer. The tRNA molecule binds across the dimer.

Its subcellular location is the cytoplasm. The enzyme catalyses tRNA(Ser) + L-serine + ATP = L-seryl-tRNA(Ser) + AMP + diphosphate + H(+). It carries out the reaction tRNA(Sec) + L-serine + ATP = L-seryl-tRNA(Sec) + AMP + diphosphate + H(+). It participates in aminoacyl-tRNA biosynthesis; selenocysteinyl-tRNA(Sec) biosynthesis; L-seryl-tRNA(Sec) from L-serine and tRNA(Sec): step 1/1. In terms of biological role, catalyzes the attachment of serine to tRNA(Ser). Is also able to aminoacylate tRNA(Sec) with serine, to form the misacylated tRNA L-seryl-tRNA(Sec), which will be further converted into selenocysteinyl-tRNA(Sec). In Bacillus cereus (strain ATCC 10987 / NRS 248), this protein is Serine--tRNA ligase.